The sequence spans 174 residues: Beta-lactoglobulin (174 aa).

The N-terminal stretch at 1–18 (MKFLLLTVGLALIGAIQA) is a signal peptide. 2 disulfides stabilise this stretch: cysteine 79-cysteine 172 and cysteine 122-cysteine 134.

The protein belongs to the calycin superfamily. Lipocalin family. As to quaternary structure, monomer.

The protein resides in the secreted. In terms of biological role, lactoglobulin is the primary component of whey, it binds retinol and is probably involved in the transport of that molecule. The polypeptide is Beta-lactoglobulin (LGB) (Notamacropus eugenii (Tammar wallaby)).